We begin with the raw amino-acid sequence, 425 residues long: 5-hydroxytryptamine receptor 7 (425 aa).

Residues 1–72 (MLIQVQPSHL…LLYGDTEKIV (72 aa)) are Extracellular-facing. N-linked (GlcNAc...) asparagine glycans are attached at residues Asn-14, Asn-41, and Asn-51. The chain crosses the membrane as a helical span at residues 73 to 97 (IGVVLSIITLFTIAGNALVIISVCI). Topologically, residues 98–107 (VKKLRQPSNY) are cytoplasmic. Residues 108-129 (LVVSLAAADLSVAVAVMPFVII) traverse the membrane as a helical segment. Residues 130 to 141 (TDLVGGEWLFGK) are Extracellular-facing. A helical transmembrane segment spans residues 142 to 167 (VFCNVFIAMDVMCCTASIMTLCVISV). Cys-144 and Cys-220 form a disulfide bridge. Asp-151 provides a ligand contact to serotonin. Topologically, residues 168-187 (DRYLGITRPLTYPARQNGKL) are cytoplasmic. A helical membrane pass occupies residues 188 to 208 (MAKMVFIVWLLSASITLPPLF). Residues 209–226 (GWAKNVNVERVCLISQDF) are Extracellular-facing. The chain crosses the membrane as a helical span at residues 227-249 (GYTVYSTAVAFYIPMTVMLVMYQ). Residues 250-322 (RIFVAAKISA…SIFKREQKAA (73 aa)) lie on the Cytoplasmic side of the membrane. Residues 323–348 (RTLGIIVGAFTFCWLPFFLLSTARPF) traverse the membrane as a helical segment. Over 349–359 (ICGIMCSCMPL) the chain is Extracellular. A helical membrane pass occupies residues 360–383 (RLERTLLWLGYTNSLINPLIYAFF). Residues 384–425 (NRDLRTTFWNLLRCKYTNINRRLSAASMHEALKVTERHEGIL) are Cytoplasmic-facing. Cys-397 is lipidated: S-palmitoyl cysteine.

This sequence belongs to the G-protein coupled receptor 1 family.

The protein resides in the cell membrane. Its function is as follows. G-protein coupled receptor for 5-hydroxytryptamine (serotonin), a biogenic hormone that functions as a neurotransmitter, a hormone and a mitogen. Ligand binding causes a conformation change that triggers signaling via guanine nucleotide-binding proteins (G proteins) and modulates the activity of downstream effectors. HTR7 is coupled to G(s) G alpha proteins and mediates activation of adenylate cyclase activity. The polypeptide is 5-hydroxytryptamine receptor 7 (htr7) (Xenopus laevis (African clawed frog)).